A 300-amino-acid chain; its full sequence is 3-dehydrocarnitine:acetyl-CoA trimethylamine transferase (300 aa).

3 residues coordinate Zn(2+): His51, His53, and Glu254.

It belongs to the BKACE family. In terms of assembly, homotetramer. The cofactor is Zn(2+).

The catalysed reaction is 3-dehydrocarnitine + acetyl-CoA = N,N,N-trimethylglycyl-CoA + acetoacetate. It participates in amine and polyamine metabolism; carnitine metabolism. Catalyzes the condensation of dehydrocarnitine and acetyl-CoA, forming acetoacetate and betainyl-CoA (N,N,N-trimethylglycyl-CoA). Is involved in a L-carnitine degradation pathway that allows R.meliloti to grow on L-carnitine as the sole source of carbon and nitrogen. In Rhizobium meliloti (strain 1021) (Ensifer meliloti), this protein is 3-dehydrocarnitine:acetyl-CoA trimethylamine transferase.